The chain runs to 70 residues: Mu-agatoxin-Ao1a (70 aa).

A signal peptide spans 1-20 (MKAIIFFCFLSVMVFIVAEA). A propeptide spanning residues 21–33 (SSLEALKIFEGER) is cleaved from the precursor. Disulfide bonds link C35-C50, C42-C55, C49-C65, and C57-C63. At N69 the chain carries Asparagine amide.

It belongs to the neurotoxin 07 (Beta/delta-agtx) family. 04 (aga-5) subfamily. Expressed by the venom gland.

The protein resides in the secreted. Its function is as follows. Insecticidal neurotoxin that modulates the insect Nav channel (DmNaV1/tipE (para/tipE)) in a unique manner, with both the activation and inactivation processes being affected. The voltage dependence of activation is shifted toward more hyperpolarized potentials (analogous to site 4 toxins) and a non-inactivating persistent sodium current is induced (site 3-like action). Interestingly, both effects take place in a voltage-dependent manner, producing a bell-shaped curve between -80 and 0 mV. In Agelena orientalis (Funnel-web spider), this protein is Mu-agatoxin-Ao1a.